A 28-amino-acid chain; its full sequence is 50 kDa venom protease (28 aa).

The protein belongs to the venom metalloproteinase (M12B) family. It depends on Zn(2+) as a cofactor. In terms of tissue distribution, expressed by the venom gland.

It localises to the secreted. The chain is 50 kDa venom protease from Proatheris superciliaris (Lowland swamp viper).